We begin with the raw amino-acid sequence, 417 residues long: Serine--tRNA ligase (417 aa).

Thr-226 to Glu-228 provides a ligand contact to L-serine. ATP contacts are provided by residues Arg-257–Glu-259 and Val-273. Glu-280 contributes to the L-serine binding site. Glu-344–Ser-347 provides a ligand contact to ATP. Position 379 (Thr-379) interacts with L-serine.

This sequence belongs to the class-II aminoacyl-tRNA synthetase family. Type-1 seryl-tRNA synthetase subfamily. In terms of assembly, homodimer. The tRNA molecule binds across the dimer.

It localises to the cytoplasm. It catalyses the reaction tRNA(Ser) + L-serine + ATP = L-seryl-tRNA(Ser) + AMP + diphosphate + H(+). It carries out the reaction tRNA(Sec) + L-serine + ATP = L-seryl-tRNA(Sec) + AMP + diphosphate + H(+). It participates in aminoacyl-tRNA biosynthesis; selenocysteinyl-tRNA(Sec) biosynthesis; L-seryl-tRNA(Sec) from L-serine and tRNA(Sec): step 1/1. Functionally, catalyzes the attachment of serine to tRNA(Ser). Is also able to aminoacylate tRNA(Sec) with serine, to form the misacylated tRNA L-seryl-tRNA(Sec), which will be further converted into selenocysteinyl-tRNA(Sec). The polypeptide is Serine--tRNA ligase (Tropheryma whipplei (strain Twist) (Whipple's bacillus)).